The following is a 414-amino-acid chain: tRNA methyltransferase 10 homolog C (414 aa).

A mitochondrion-targeting transit peptide spans 1–35 (MNVTVRFLRPFARCLVPYTFHRKRSHLYSGVLQRY). S79 carries the post-translational modification Phosphoserine. The stretch at 133-171 (GKEKAKKAKQVKKEMKAEAREEAKRARLLETTAEEQQQD) forms a coiled coil. The SAM-dependent MTase TRM10-type domain occupies 186–378 (LGWKGVQAMQ…KFVPRRKHTG (193 aa)).

This sequence belongs to the class IV-like SAM-binding methyltransferase superfamily. TRM10 family. As to quaternary structure, component of mitochondrial ribonuclease P, a complex composed of TRMT10C/MRPP1, HSD17B10/MRPP2 and PRORP/MRPP3. Interacts with HSD17B10/MRPP2; forming the MRPP1-MRPP2 subcomplex of the mitochondrial ribonuclease P complex. Interacts with GRSF1.

It is found in the mitochondrion matrix. The protein resides in the mitochondrion nucleoid. It carries out the reaction adenosine(9) in tRNA + S-adenosyl-L-methionine = N(1)-methyladenosine(9) in tRNA + S-adenosyl-L-homocysteine + H(+). It catalyses the reaction guanosine(9) in tRNA + S-adenosyl-L-methionine = N(1)-methylguanosine(9) in tRNA + S-adenosyl-L-homocysteine + H(+). The catalysed reaction is an adenosine in mRNA + S-adenosyl-L-methionine = an N(1)-methyladenosine in mRNA + S-adenosyl-L-homocysteine + H(+). Mitochondrial tRNA N(1)-methyltransferase involved in mitochondrial tRNA maturation. Component of mitochondrial ribonuclease P, a complex composed of TRMT10C/MRPP1, HSD17B10/MRPP2 and PRORP/MRPP3, which cleaves tRNA molecules in their 5'-ends. Together with HSD17B10/MRPP2, forms a subcomplex of the mitochondrial ribonuclease P, named MRPP1-MRPP2 subcomplex, which displays functions that are independent of the ribonuclease P activity. The MRPP1-MRPP2 subcomplex catalyzes the formation of N(1)-methylguanine and N(1)-methyladenine at position 9 (m1G9 and m1A9, respectively) in tRNAs; TRMT10C/MRPP1 acting as the catalytic N(1)-methyltransferase subunit. The MRPP1-MRPP2 subcomplex also acts as a tRNA maturation platform: following 5'-end cleavage by the mitochondrial ribonuclease P complex, the MRPP1-MRPP2 subcomplex enhances the efficiency of 3'-processing catalyzed by ELAC2, retains the tRNA product after ELAC2 processing and presents the nascent tRNA to the mitochondrial CCA tRNA nucleotidyltransferase TRNT1 enzyme. In addition to tRNA N(1)-methyltransferase activity, TRMT10C/MRPP1 also acts as a mRNA N(1)-methyltransferase by mediating methylation of adenosine residues at the N(1) position of MT-ND5 mRNA. Associates with mitochondrial DNA complexes at the nucleoids to initiate RNA processing and ribosome assembly. This is tRNA methyltransferase 10 homolog C from Mus musculus (Mouse).